The chain runs to 285 residues: Ribosomal protein L11 methyltransferase (285 aa).

S-adenosyl-L-methionine is bound by residues T131, G154, D176, and N223.

The protein belongs to the methyltransferase superfamily. PrmA family.

It is found in the cytoplasm. It carries out the reaction L-lysyl-[protein] + 3 S-adenosyl-L-methionine = N(6),N(6),N(6)-trimethyl-L-lysyl-[protein] + 3 S-adenosyl-L-homocysteine + 3 H(+). Functionally, methylates ribosomal protein L11. This is Ribosomal protein L11 methyltransferase from Brucella melitensis biotype 2 (strain ATCC 23457).